The sequence spans 569 residues: 5'-AMP-activated protein kinase subunit gamma-2 (569 aa).

The disordered stretch occupies residues 1–222 (MGSAVMDTKK…TRPPLASPTH (222 aa)). Residues serine 65, serine 71, serine 73, serine 90, serine 138, serine 143, serine 161, and serine 162 each carry the phosphoserine modification. Positions 156–167 (TSGLSSSPSTPT) are enriched in low complexity. Position 165 is a phosphothreonine (threonine 165). Residues 179-189 (SYKHEPERLEN) are compositionally biased toward basic and acidic residues. Positions 192-212 (YASSSPPDTGQRFCPSSFQSP) are enriched in polar residues. At serine 196 the chain carries Phosphoserine. CBS domains follow at residues 275 to 335 (PTSS…KSPM), 357 to 415 (TFKP…MSDM), and 430 to 492 (IGTY…NLDI). ADP contacts are provided by residues arginine 302, 317–322 (MLTITD), valine 362, 383–384 (HR), and lysine 402. AMP-binding positions include arginine 302, 317 to 322 (MLTITD), valine 362, histidine 383, 383 to 384 (HR), lysine 402, threonine 432, alanine 437, 458 to 459 (SA), 474 to 477 (SKFD), arginine 501, histidine 530, 530 to 531 (HR), and 546 to 549 (SLSD). ATP-binding positions include arginine 302, 317–322 (MLTITD), valine 362, 383–384 (HR), arginine 384, and lysine 402. Residues 370-391 (LFDAVYSLIKNKIHRLPVIDPI) carry the AMPK pseudosubstrate motif. Residues 474-477 (SKFD), arginine 501, and 530-531 (HR) each bind ADP. Residues 474-477 (SKFD), arginine 501, and 530-531 (HR) each bind ATP. Positions 504–562 (YFEGVVKCNKLEILETIVDRIVRAEVHRLVVVNEADSIVGIISLSDILQALILTPAGAK) constitute a CBS 4 domain.

Belongs to the 5'-AMP-activated protein kinase gamma subunit family. AMPK is a heterotrimer of an alpha catalytic subunit (PRKAA1 or PRKAA2), a beta (PRKAB1 or PRKAB2) and a gamma non-catalytic subunits (PRKAG1, PRKAG2 or PRKAG3). Interacts with FNIP1 and FNIP2. Post-translationally, phosphorylated by ULK1; leading to negatively regulate AMPK activity and suggesting the existence of a regulatory feedback loop between ULK1 and AMPK. Glycosylated; O-GlcNAcylated by OGT, promoting the AMP-activated protein kinase (AMPK) activity. In terms of tissue distribution, isoform B is ubiquitously expressed except in liver and thymus. The highest level is detected in heart with abundant expression in placenta and testis.

Functionally, AMP/ATP-binding subunit of AMP-activated protein kinase (AMPK), an energy sensor protein kinase that plays a key role in regulating cellular energy metabolism. In response to reduction of intracellular ATP levels, AMPK activates energy-producing pathways and inhibits energy-consuming processes: inhibits protein, carbohydrate and lipid biosynthesis, as well as cell growth and proliferation. AMPK acts via direct phosphorylation of metabolic enzymes, and by longer-term effects via phosphorylation of transcription regulators. Also acts as a regulator of cellular polarity by remodeling the actin cytoskeleton; probably by indirectly activating myosin. Gamma non-catalytic subunit mediates binding to AMP, ADP and ATP, leading to activate or inhibit AMPK: AMP-binding results in allosteric activation of alpha catalytic subunit (PRKAA1 or PRKAA2) both by inducing phosphorylation and preventing dephosphorylation of catalytic subunits. ADP also stimulates phosphorylation, without stimulating already phosphorylated catalytic subunit. ATP promotes dephosphorylation of catalytic subunit, rendering the AMPK enzyme inactive. The sequence is that of 5'-AMP-activated protein kinase subunit gamma-2 (PRKAG2) from Homo sapiens (Human).